Reading from the N-terminus, the 372-residue chain is GTP cyclohydrolase 1 type 2 homolog (372 aa).

Residues His67, His68, Asp106, His332, and Glu335 each coordinate a divalent metal cation.

It belongs to the GTP cyclohydrolase I type 2/NIF3 family. Homohexamer.

This chain is GTP cyclohydrolase 1 type 2 homolog, found in Halalkalibacterium halodurans (strain ATCC BAA-125 / DSM 18197 / FERM 7344 / JCM 9153 / C-125) (Bacillus halodurans).